A 181-amino-acid chain; its full sequence is Translation initiation factor IF-3, chloroplastic (181 aa).

Belongs to the IF-3 family. As to quaternary structure, monomer.

It is found in the plastid. Its subcellular location is the chloroplast. In terms of biological role, IF-3 binds to the 30S ribosomal subunit and shifts the equilibrium between 70S ribosomes and their 50S and 30S subunits in favor of the free subunits, thus enhancing the availability of 30S subunits on which protein synthesis initiation begins. The polypeptide is Translation initiation factor IF-3, chloroplastic (Gracilaria tenuistipitata var. liui (Red alga)).